The sequence spans 396 residues: Tryptophan synthase beta chain (396 aa).

The residue at position 86 (Lys86) is an N6-(pyridoxal phosphate)lysine.

Belongs to the TrpB family. In terms of assembly, tetramer of two alpha and two beta chains. Pyridoxal 5'-phosphate serves as cofactor.

The enzyme catalyses (1S,2R)-1-C-(indol-3-yl)glycerol 3-phosphate + L-serine = D-glyceraldehyde 3-phosphate + L-tryptophan + H2O. It functions in the pathway amino-acid biosynthesis; L-tryptophan biosynthesis; L-tryptophan from chorismate: step 5/5. The beta subunit is responsible for the synthesis of L-tryptophan from indole and L-serine. In Vibrio atlanticus (strain LGP32) (Vibrio splendidus (strain Mel32)), this protein is Tryptophan synthase beta chain.